We begin with the raw amino-acid sequence, 210 residues long: Holliday junction branch migration complex subunit RuvA (210 aa).

The domain I stretch occupies residues 1–64 (MIGLIEGRVC…EDAQLLYGFL (64 aa)). The interval 65–143 (HPTERDVFRQ…HIQSDMSLLT (79 aa)) is domain II. A flexible linker region spans residues 144 to 154 (EVEQQIGIAAN). The tract at residues 155-210 (SEGVILAEVESALISLGYRDKEAQQAIKAARETDAGQQLVDTQSLLKLTLKQLSNF) is domain III.

This sequence belongs to the RuvA family. As to quaternary structure, homotetramer. Forms an RuvA(8)-RuvB(12)-Holliday junction (HJ) complex. HJ DNA is sandwiched between 2 RuvA tetramers; dsDNA enters through RuvA and exits via RuvB. An RuvB hexamer assembles on each DNA strand where it exits the tetramer. Each RuvB hexamer is contacted by two RuvA subunits (via domain III) on 2 adjacent RuvB subunits; this complex drives branch migration. In the full resolvosome a probable DNA-RuvA(4)-RuvB(12)-RuvC(2) complex forms which resolves the HJ.

It is found in the cytoplasm. Its function is as follows. The RuvA-RuvB-RuvC complex processes Holliday junction (HJ) DNA during genetic recombination and DNA repair, while the RuvA-RuvB complex plays an important role in the rescue of blocked DNA replication forks via replication fork reversal (RFR). RuvA specifically binds to HJ cruciform DNA, conferring on it an open structure. The RuvB hexamer acts as an ATP-dependent pump, pulling dsDNA into and through the RuvAB complex. HJ branch migration allows RuvC to scan DNA until it finds its consensus sequence, where it cleaves and resolves the cruciform DNA. The polypeptide is Holliday junction branch migration complex subunit RuvA (Psychrobacter sp. (strain PRwf-1)).